A 161-amino-acid chain; its full sequence is 2-C-methyl-D-erythritol 2,4-cyclodiphosphate synthase (161 aa).

A divalent metal cation contacts are provided by Asp14 and His16. 4-CDP-2-C-methyl-D-erythritol 2-phosphate is bound by residues 14–16 and 40–41; these read DVH and HS. Residue His48 coordinates a divalent metal cation. 4-CDP-2-C-methyl-D-erythritol 2-phosphate-binding positions include 62 to 64, Phe142, and Arg145; that span reads DLG.

It belongs to the IspF family. In terms of assembly, homotrimer. The cofactor is a divalent metal cation.

It carries out the reaction 4-CDP-2-C-methyl-D-erythritol 2-phosphate = 2-C-methyl-D-erythritol 2,4-cyclic diphosphate + CMP. The protein operates within isoprenoid biosynthesis; isopentenyl diphosphate biosynthesis via DXP pathway; isopentenyl diphosphate from 1-deoxy-D-xylulose 5-phosphate: step 4/6. In terms of biological role, involved in the biosynthesis of isopentenyl diphosphate (IPP) and dimethylallyl diphosphate (DMAPP), two major building blocks of isoprenoid compounds. Catalyzes the conversion of 4-diphosphocytidyl-2-C-methyl-D-erythritol 2-phosphate (CDP-ME2P) to 2-C-methyl-D-erythritol 2,4-cyclodiphosphate (ME-CPP) with a corresponding release of cytidine 5-monophosphate (CMP). The protein is 2-C-methyl-D-erythritol 2,4-cyclodiphosphate synthase of Acidothermus cellulolyticus (strain ATCC 43068 / DSM 8971 / 11B).